The chain runs to 987 residues: Pentatricopeptide repeat-containing protein At1g06710, mitochondrial (987 aa).

The transit peptide at 1–42 (MNKTVVRCLLSRSHHPLIHFSTNLSLLHRVFTCSRYLTARFM) directs the protein to the mitochondrion. PPR repeat units lie at residues 164 to 198 (TAPV…DKEV), 199 to 233 (FGEF…RFRP), 234 to 268 (SRST…NLRM), 269 to 299 (DGFT…ENFV), 301 to 335 (DTVF…SCLP), 336 to 370 (NVVT…GCYP), 371 to 405 (SPKI…GHMP), 406 to 446 (GYVV…GVVL), 447 to 481 (NKIN…GFIP), 482 to 516 (DTST…GLVA), 517 to 551 (DVYT…GCTP), 552 to 586 (NVVT…GCLP), 587 to 621 (NIVT…KDVP), 638 to 672 (NVVT…GCEP), 673 to 707 (NQIV…GFPA), 708 to 742 (TLYT…SCAP), 743 to 777 (NVVI…GCQP), 778 to 812 (NVVT…GVAP), 813 to 847 (NYVT…HWPT), 881 to 915 (FLSV…SATL), 918 to 952 (YSST…GVIP), and 953 to 987 (EMQS…VCPL).

The protein belongs to the PPR family. P subfamily.

It is found in the mitochondrion. The protein is Pentatricopeptide repeat-containing protein At1g06710, mitochondrial of Arabidopsis thaliana (Mouse-ear cress).